A 372-amino-acid chain; its full sequence is NAD(P)H-quinone oxidoreductase subunit 1 (372 aa).

8 helical membrane-spanning segments follow: residues 27–47 (IIWL…GVLV), 97–117 (ILFT…WLIV), 128–148 (VGIG…GLLM), 176–196 (LALS…IDIV), 204–224 (ILSW…ICAL), 266–286 (ILSA…PIPV), 308–328 (SIGI…AILL), and 347–367 (FLLP…LAFP).

Belongs to the complex I subunit 1 family. NDH-1 is composed of at least 11 different subunits.

The protein resides in the cellular thylakoid membrane. It carries out the reaction a plastoquinone + NADH + (n+1) H(+)(in) = a plastoquinol + NAD(+) + n H(+)(out). The catalysed reaction is a plastoquinone + NADPH + (n+1) H(+)(in) = a plastoquinol + NADP(+) + n H(+)(out). NDH-1 shuttles electrons from an unknown electron donor, via FMN and iron-sulfur (Fe-S) centers, to quinones in the respiratory and/or the photosynthetic chain. The immediate electron acceptor for the enzyme in this species is believed to be plastoquinone. Couples the redox reaction to proton translocation, and thus conserves the redox energy in a proton gradient. The chain is NAD(P)H-quinone oxidoreductase subunit 1 from Prochlorococcus marinus (strain MIT 9312).